The chain runs to 263 residues: Endonuclease 8 (263 aa).

Catalysis depends on Pro-2, which acts as the Schiff-base intermediate with DNA. Glu-3 functions as the Proton donor in the catalytic mechanism. Lys-53 serves as the catalytic Proton donor; for beta-elimination activity. Residues Gln-70, Arg-125, and Asn-169 each coordinate DNA. An FPG-type zinc finger spans residues 229-263; the sequence is KVFHRDGELCERCGGIIEKTTLSSRPFYWCPGCQH. The Proton donor; for delta-elimination activity role is filled by Arg-253.

It belongs to the FPG family. Zn(2+) is required as a cofactor.

The catalysed reaction is 2'-deoxyribonucleotide-(2'-deoxyribose 5'-phosphate)-2'-deoxyribonucleotide-DNA = a 3'-end 2'-deoxyribonucleotide-(2,3-dehydro-2,3-deoxyribose 5'-phosphate)-DNA + a 5'-end 5'-phospho-2'-deoxyribonucleoside-DNA + H(+). Involved in base excision repair of DNA damaged by oxidation or by mutagenic agents. Acts as a DNA glycosylase that recognizes and removes damaged bases. Has a preference for oxidized pyrimidines, such as thymine glycol, 5,6-dihydrouracil and 5,6-dihydrothymine. Has AP (apurinic/apyrimidinic) lyase activity and introduces nicks in the DNA strand. Cleaves the DNA backbone by beta-delta elimination to generate a single-strand break at the site of the removed base with both 3'- and 5'-phosphates. The protein is Endonuclease 8 of Escherichia coli O7:K1 (strain IAI39 / ExPEC).